A 485-amino-acid polypeptide reads, in one-letter code: Silicon efflux transporter LSI3 (485 aa).

The next 5 membrane-spanning stretches (helical) occupy residues 14–34 (VAFGVFWMLAVFPSVPFLPIG), 37–57 (AGALLGAVLMIVFHVISADDA), 59–79 (ASIDLPILGLLFATMVVGGYL), 106–126 (VCVVTALASALFTNDTCCVVL), and 180–200 (FLLGILPAMLAGMGINMLMLL). Positions 233–242 (ALNNNKKDDG) are enriched in basic and acidic residues. A disordered region spans residues 233 to 261 (ALNNNKKDDGDAATPASPEDDDGGDAESM). Transmembrane regions (helical) follow at residues 283 to 303 (LFLKSFAYVVTVGMLVAYMLG), 336 to 356 (LLVFFSGMFVTVSGFNKTGLP), 377 to 397 (VLSVIILLLSNLASNVPTVLL), 418 to 438 (WLLLAWVSTVAGNLSLLGSAA), and 461 to 481 (HVIFGLPSTLVVTAIGIPLIG).

The protein belongs to the arsenite-antimonite (ArsB) efflux (TC 2.A.45) family.

The protein resides in the cell membrane. Functionally, silicon efflux transporter involved in silicon transport in shoots. In the nodes, involved with LSI2 and NIP2-2/LSI6 in silicon intervascular transfer, which is required for the preferential distribution of silicon, such as hyperaccumulation of silicon in the husk. Silicon is beneficial to plant growth and helps plants to overcome abiotic and biotic stresses by preventing lodging (falling over) and increasing resistance to pests and diseases, as well as other stresses. The polypeptide is Silicon efflux transporter LSI3 (Oryza sativa subsp. japonica (Rice)).